A 203-amino-acid chain; its full sequence is Thymidylate kinase (203 aa).

Residue 14 to 21 (GMDGIGKS) participates in ATP binding.

The protein belongs to the thymidylate kinase family.

The enzyme catalyses dTMP + ATP = dTDP + ADP. Its function is as follows. Phosphorylation of dTMP to form dTDP in both de novo and salvage pathways of dTTP synthesis. The chain is Thymidylate kinase from Rickettsia typhi (strain ATCC VR-144 / Wilmington).